The sequence spans 98 residues: UPF0235 protein azo3464 (98 aa).

This sequence belongs to the UPF0235 family.

In Azoarcus sp. (strain BH72), this protein is UPF0235 protein azo3464.